The following is a 124-amino-acid chain: Small ribosomal subunit protein uS12 (124 aa).

Positions 1–24 are disordered; it reads MPTISQLVRKGRAKITKKSKSAAL. Basic residues predominate over residues 9–20; sequence RKGRAKITKKSK. Asp89 bears the 3-methylthioaspartic acid mark. The interval 105-124 is disordered; the sequence is AGVEGRTQRRSKYGAKRPKK. Over residues 112–124 the composition is skewed to basic residues; the sequence is QRRSKYGAKRPKK.

Belongs to the universal ribosomal protein uS12 family. In terms of assembly, part of the 30S ribosomal subunit. Contacts proteins S8 and S17. May interact with IF1 in the 30S initiation complex.

Functionally, with S4 and S5 plays an important role in translational accuracy. Its function is as follows. Interacts with and stabilizes bases of the 16S rRNA that are involved in tRNA selection in the A site and with the mRNA backbone. Located at the interface of the 30S and 50S subunits, it traverses the body of the 30S subunit contacting proteins on the other side and probably holding the rRNA structure together. The combined cluster of proteins S8, S12 and S17 appears to hold together the shoulder and platform of the 30S subunit. The chain is Small ribosomal subunit protein uS12 from Christiangramia forsetii (strain DSM 17595 / CGMCC 1.15422 / KT0803) (Gramella forsetii).